Here is a 227-residue protein sequence, read N- to C-terminus: PKHD-type hydroxylase Swit_4046 (227 aa).

Residues 78-178 form the Fe2OG dioxygenase domain; sequence KVFPPLFNLY…RLCSFFWIQS (101 aa). His96, Asp98, and His159 together coordinate Fe cation. Arg169 provides a ligand contact to 2-oxoglutarate.

Fe(2+) serves as cofactor. The cofactor is L-ascorbate.

This Rhizorhabdus wittichii (strain DSM 6014 / CCUG 31198 / JCM 15750 / NBRC 105917 / EY 4224 / RW1) (Sphingomonas wittichii) protein is PKHD-type hydroxylase Swit_4046.